Consider the following 153-residue polypeptide: Probable succinate transporter subunit YjjB (153 aa).

4 helical membrane-spanning segments follow: residues Trp-7–Phe-27, Met-51–Ile-71, Val-83–Ile-103, and Phe-125–Trp-145.

It belongs to the ThrE exporter (TC 2.A.79) family. As to quaternary structure, the transporter is composed of YjjB and YjjP.

The protein localises to the cell inner membrane. Involved in succinate export with YjjP. Both proteins are required for export. The sequence is that of Probable succinate transporter subunit YjjB from Yersinia pestis bv. Antiqua (strain Antiqua).